Reading from the N-terminus, the 157-residue chain is Transcription elongation factor GreA (157 aa).

Positions Glu17–Glu37 form a coiled coil.

The protein belongs to the GreA/GreB family.

Necessary for efficient RNA polymerase transcription elongation past template-encoded arresting sites. The arresting sites in DNA have the property of trapping a certain fraction of elongating RNA polymerases that pass through, resulting in locked ternary complexes. Cleavage of the nascent transcript by cleavage factors such as GreA or GreB allows the resumption of elongation from the new 3'terminus. GreA releases sequences of 2 to 3 nucleotides. The chain is Transcription elongation factor GreA from Vibrio parahaemolyticus serotype O3:K6 (strain RIMD 2210633).